The following is a 135-amino-acid chain: C-type lectin LmsL (135 aa).

Disulfide bonds link Cys-3–Cys-14, Cys-31–Cys-131, Cys-38–Cys-133, and Cys-106–Cys-123. In terms of domain architecture, C-type lectin spans 10–132 (MNGLCYKIFD…CESKNAFLCQ (123 aa)). Ca(2+) contacts are provided by Gln-96, Asp-98, Glu-104, Asn-119, and Asp-120. The Galactose-binding motif lies at 96–98 (QPD).

Belongs to the true venom lectin family. Homodimer; disulfide-linked. As to expression, expressed by the venom gland.

The protein localises to the secreted. In terms of biological role, galactose-binding protein which recognizes specific carbohydrate structures and agglutinates a variety of animal cells by binding to cell-surface glycoproteins and glycolipids. Is a calcium-dependent lectin. Shows high hemagglutinating activity, that is inhibited by lactose, galactose and inositol. The chain is C-type lectin LmsL from Lachesis stenophrys (Central American bushmaster).